Consider the following 536-residue polypeptide: B3 domain-containing protein Os03g0619800 (536 aa).

The TF-B3 1 DNA-binding region spans 26-119; that stretch reads MRCFLRRMAA…RYEVLILDSD (94 aa). The segment at 138–199 is disordered; it reads DKTVDPVDSS…VEPQTPSGSD (62 aa). Composition is skewed to low complexity over residues 145-160 and 171-183; these read DSSGSSSNDTTQSSRS and SSSEKSGEDSPSG. The segment at residues 231 to 330 is a DNA-binding region (TF-B3 2); that stretch reads VAVMKKCNLQ…AFTVHLLQAE (100 aa). Positions 335–396 are disordered; the sequence is RDGTDVHKIG…SDGPSEPPYI (62 aa). The segment covering 344–355 has biased composition (polar residues); the sequence is GSSQNKRNSKMA. A compositionally biased stretch (basic and acidic residues) spans 372 to 382; sequence SNKHGVSHESL. Positions 429 to 529 form a DNA-binding region, TF-B3 3; sequence ISKLAGSGGK…TMEVHIISNL (101 aa).

The protein localises to the nucleus. The protein is B3 domain-containing protein Os03g0619800 of Oryza sativa subsp. japonica (Rice).